A 54-amino-acid chain; its full sequence is Ovomucoid (54 aa).

The Kazal-like domain occupies 4–54 (VDCSDYPKPSCTLEDKPLCGSDNQTYSNKCSFCNAVVDSNGTLTLSHFGKC). Intrachain disulfides connect cysteine 6-cysteine 36, cysteine 14-cysteine 33, and cysteine 22-cysteine 54. The N-linked (GlcNAc...) asparagine glycan is linked to asparagine 43.

The protein localises to the secreted. This is Ovomucoid from Megapodius freycinet (Dusky scrubfowl).